We begin with the raw amino-acid sequence, 251 residues long: Probable transcriptional regulatory protein cauri_1421 (251 aa).

Residues 1 to 21 (MAGHSKWATTKHKKAANDAKR) form a disordered region.

This sequence belongs to the TACO1 family.

The protein resides in the cytoplasm. The chain is Probable transcriptional regulatory protein cauri_1421 from Corynebacterium aurimucosum (strain ATCC 700975 / DSM 44827 / CIP 107346 / CN-1) (Corynebacterium nigricans).